Reading from the N-terminus, the 160-residue chain is MPAEGIPQINLDPGAAEGLRVAVISAQWNAEITDKLHAEAIGAARELGASVEDWRVAGALELPVVVAAACKNFDAVIATGCVIEGETEHFRVVCDAVTYGLTRVSLDTGVPIGNGVLTVANHQQAVDRAGGPEAKENKGADSATAAIHAALVLRQIAAVG.

5-amino-6-(D-ribitylamino)uracil-binding positions include Trp-28, Ala-59–Glu-61, and Cys-81–Ile-83. Glu-86–Thr-87 lines the (2S)-2-hydroxy-3-oxobutyl phosphate pocket. His-89 acts as the Proton donor in catalysis. Residue Asn-114 coordinates 5-amino-6-(D-ribitylamino)uracil. Arg-128 contributes to the (2S)-2-hydroxy-3-oxobutyl phosphate binding site.

The protein belongs to the DMRL synthase family.

It catalyses the reaction (2S)-2-hydroxy-3-oxobutyl phosphate + 5-amino-6-(D-ribitylamino)uracil = 6,7-dimethyl-8-(1-D-ribityl)lumazine + phosphate + 2 H2O + H(+). It participates in cofactor biosynthesis; riboflavin biosynthesis; riboflavin from 2-hydroxy-3-oxobutyl phosphate and 5-amino-6-(D-ribitylamino)uracil: step 1/2. Functionally, catalyzes the formation of 6,7-dimethyl-8-ribityllumazine by condensation of 5-amino-6-(D-ribitylamino)uracil with 3,4-dihydroxy-2-butanone 4-phosphate. This is the penultimate step in the biosynthesis of riboflavin. This chain is 6,7-dimethyl-8-ribityllumazine synthase, found in Corynebacterium urealyticum (strain ATCC 43042 / DSM 7109).